The sequence spans 59 residues: Small ribosomal subunit protein bS21 (59 aa).

The segment covering 32-42 has biased composition (basic and acidic residues); sequence VRKREHYDKPS. The segment at 32–59 is disordered; the sequence is VRKREHYDKPSVKRKKKAEAARRKNAKK. Over residues 43 to 59 the composition is skewed to basic residues; the sequence is VKRKKKAEAARRKNAKK.

The protein belongs to the bacterial ribosomal protein bS21 family.

The polypeptide is Small ribosomal subunit protein bS21 (Clostridioides difficile (strain 630) (Peptoclostridium difficile)).